A 701-amino-acid polypeptide reads, in one-letter code: MFSALKKLVGSEQAPGRDRNIPAGLQSMNQALQRRFAKGVQYNMKIVIRGDRNTGKTALWHRLQGKKFVEEYIPTQEIQVTSIHWSYKTTDDVVKVEVWDVVDKGKCKKRGDGLKMENDPQEAESEMALDAEFLDVYKNCNGVVMMFDITKQWTFNYILRELPKVPTHVPVCVLGNYRDMGEHRVILPDDVRDVLDHLDRPPGSSYFRYAESSMKNSFGLKYLHRFFNIPFLQLQRETLLRQLETNQLDIDATLEELSVQQETEDQNYDIFLEMMEARSRGHASPLTTSGQSPSSGSQSPVVPPSTVSTGSSSPSTPQPVLQPPLQAPPAPPAPAEAPPLPAAPPRRSIIARLFGSTPATEAAPPPPEPTPAAEASQKVQNVEDFVPEDSLDGSFLEDTVPAKDEKRLGARGPQDSDSDRETQAGNPMVAGFQDDVDLEDKPPSRPLPPTGPVPSEDITLSSEEEAEEGAGHPKAAVLAPQKCPEPETRRSSTKALGPPRDAAPRAAKPRPEGPSGKLEEGTDKPVSSESDAEGPIAAQMLSFVMDDPDFESDSDAQRRAGEFPVREDLSDLTDEDAGPVQPPAPPKPLAPSFRLKDDSDLFGLGLEEPGREDSSEQDKEGRPPAKEKKKKKKKGREEEDKAAKKRSKHKKSRERADDKGRDERRRRPRGPQRTALDELEAFLGGGAPSGPLRGGGDYEAL.

Met1 carries the N-acetylmethionine modification. The interval 39-279 (GVQYNMKIVI…IFLEMMEARS (241 aa)) is small GTPase-like. GTP contacts are provided by residues 50–57 (GDRNTGKT), 100–104 (DVVDK), and 177–179 (YRD). The disordered stretch occupies residues 279-701 (SRGHASPLTT…LRGGGDYEAL (423 aa)). Residues 284 to 315 (SPLTTSGQSPSSGSQSPVVPPSTVSTGSSSPS) are compositionally biased toward low complexity. A compositionally biased stretch (pro residues) spans 316 to 344 (TPQPVLQPPLQAPPAPPAPAEAPPLPAAP). Ser394, Ser416, Ser418, Ser461, and Ser462 each carry phosphoserine. Residues 495–506 (ALGPPRDAAPRA) show a composition bias toward low complexity. Ser552 is modified (phosphoserine). The segment covering 555–569 (DAQRRAGEFPVREDL) has biased composition (basic and acidic residues). A Phosphoserine modification is found at Ser570. Thr573 is modified (phosphothreonine). A compositionally biased stretch (pro residues) spans 580–589 (VQPPAPPKPL). The segment covering 608 to 626 (EPGREDSSEQDKEGRPPAK) has biased composition (basic and acidic residues). Ser614 and Ser615 each carry phosphoserine. The interaction with CDKN2A stretch occupies residues 629–667 (KKKKKKGREEEDKAAKKRSKHKKSRERADDKGRDERRRR). Positions 643 to 653 (AKKRSKHKKSR) are enriched in basic residues. The span at 654–665 (ERADDKGRDERR) shows a compositional bias: basic and acidic residues. Over residues 683–701 (LGGGAPSGPLRGGGDYEAL) the composition is skewed to gly residues.

The protein belongs to the small GTPase superfamily. Rab family.

The protein localises to the nucleus. Its subcellular location is the cytoplasm. Functionally, may enhance cellular proliferation. May reduce growth inhibitory activity of CDKN2A. In Bos taurus (Bovine), this protein is Rab-like protein 6 (RABL6).